The following is a 103-amino-acid chain: Large ribosomal subunit protein bL21 (103 aa).

This sequence belongs to the bacterial ribosomal protein bL21 family. As to quaternary structure, part of the 50S ribosomal subunit. Contacts protein L20.

In terms of biological role, this protein binds to 23S rRNA in the presence of protein L20. The sequence is that of Large ribosomal subunit protein bL21 from Glaesserella parasuis serovar 5 (strain SH0165) (Haemophilus parasuis).